A 414-amino-acid chain; its full sequence is Serine/threonine transporter SstT (414 aa).

Transmembrane regions (helical) follow at residues 19–39 (IIVGLVLGVVTALISPDLEPV), 55–75 (FVKGLRAVAPILIFVLVIAAI), 89–109 (IVMLYIIGTFGASIVAVLASF), 148–168 (ALATSNFIGILAWAIALGIAL), 189–209 (IVHLVISLAPFGIFGLVAATL), 223–243 (LLLVLLGSMLFMALVVNPFIV), 297–317 (IPLGATINMAGAAITVTVLTL), 323–343 (LGIPVSIPTAILLSVVSAVCA), and 363–383 (LFGISGDVAAQVIAVGFVIGV).

This sequence belongs to the dicarboxylate/amino acid:cation symporter (DAACS) (TC 2.A.23) family.

It is found in the cell inner membrane. It carries out the reaction L-serine(in) + Na(+)(in) = L-serine(out) + Na(+)(out). The catalysed reaction is L-threonine(in) + Na(+)(in) = L-threonine(out) + Na(+)(out). Its function is as follows. Involved in the import of serine and threonine into the cell, with the concomitant import of sodium (symport system). The chain is Serine/threonine transporter SstT from Actinobacillus succinogenes (strain ATCC 55618 / DSM 22257 / CCUG 43843 / 130Z).